A 338-amino-acid chain; its full sequence is Aspartate carbamoyltransferase catalytic subunit (338 aa).

Positions 72 and 73 each coordinate carbamoyl phosphate. Lys100 lines the L-aspartate pocket. The carbamoyl phosphate site is built by Arg122, His152, and Gln155. 2 residues coordinate L-aspartate: Arg186 and Arg243. Residues Gly284 and Pro285 each coordinate carbamoyl phosphate.

This sequence belongs to the aspartate/ornithine carbamoyltransferase superfamily. ATCase family. As to quaternary structure, heterododecamer (2C3:3R2) of six catalytic PyrB chains organized as two trimers (C3), and six regulatory PyrI chains organized as three dimers (R2).

The catalysed reaction is carbamoyl phosphate + L-aspartate = N-carbamoyl-L-aspartate + phosphate + H(+). It participates in pyrimidine metabolism; UMP biosynthesis via de novo pathway; (S)-dihydroorotate from bicarbonate: step 2/3. Catalyzes the condensation of carbamoyl phosphate and aspartate to form carbamoyl aspartate and inorganic phosphate, the committed step in the de novo pyrimidine nucleotide biosynthesis pathway. In Acinetobacter baumannii (strain SDF), this protein is Aspartate carbamoyltransferase catalytic subunit.